A 571-amino-acid chain; its full sequence is Urease subunit alpha (571 aa).

Positions 132–571 (GGIDAHIHFI…VALAQRYFLF (440 aa)) constitute a Urease domain. Residues H137, H139, and K220 each coordinate Ni(2+). K220 carries the post-translational modification N6-carboxylysine. H222 contacts substrate. Residues H249 and H275 each coordinate Ni(2+). The active-site Proton donor is H323. D363 lines the Ni(2+) pocket.

It belongs to the metallo-dependent hydrolases superfamily. Urease alpha subunit family. As to quaternary structure, heterotrimer of UreA (gamma), UreB (beta) and UreC (alpha) subunits. Three heterotrimers associate to form the active enzyme. The cofactor is Ni cation. In terms of processing, carboxylation allows a single lysine to coordinate two nickel ions.

The protein resides in the cytoplasm. It carries out the reaction urea + 2 H2O + H(+) = hydrogencarbonate + 2 NH4(+). It functions in the pathway nitrogen metabolism; urea degradation; CO(2) and NH(3) from urea (urease route): step 1/1. This Halalkalibacterium halodurans (strain ATCC BAA-125 / DSM 18197 / FERM 7344 / JCM 9153 / C-125) (Bacillus halodurans) protein is Urease subunit alpha.